Consider the following 371-residue polypeptide: Antibiotic efflux pump periplasmic linker protein ArpA (371 aa).

Positions 1 to 22 are cleaved as a signal peptide; it reads MQFKPAVTALVSAVALATLLSG. C23 carries N-palmitoyl cysteine lipidation. C23 carries the S-diacylglycerol cysteine lipid modification. Residues 115 to 155 are a coiled coil; it reads LAERYKQLIDEQAVSKQEYDDANAKRLQAEASLKSAQIDLR.

This sequence belongs to the membrane fusion protein (MFP) (TC 8.A.1) family.

It localises to the cell inner membrane. Functionally, the periplasmic linker protein component of an antibiotic efflux pump. Confers resistance to numerous structurally unrelated antibiotics such as carbenicillin, chloramphenicol, erythromycin, novobiocin, streptomycin and tetracycline. Is not involved in organic solvent efflux. The chain is Antibiotic efflux pump periplasmic linker protein ArpA (arpA) from Pseudomonas putida (Arthrobacter siderocapsulatus).